The chain runs to 745 residues: F-box only protein 30 (745 aa).

The TRAF-type zinc-finger motif lies at 48–109; that stretch reads EHRLLCPFER…SYADRKSYEN (62 aa). Disordered stretches follow at residues 211–231 and 305–324; these read NTSV…LEDQ and GDSK…SDGT. A compositionally biased stretch (basic and acidic residues) spans 222–231; it reads QNARESLEDQ. A compositionally biased stretch (polar residues) spans 305 to 314; the sequence is GDSKQSNLTN. The F-box domain occupies 610–658; sequence NDHLSSLPFEVLQHIAGFLDGFSLCQLSCVSKLMRDVCGSLLQSRGMVI.

As to quaternary structure, part of a SCF (SKP1-cullin-F-box) protein ligase complex. Interacts with SKP1, CUL1 and RBX1/ROC1. Auto-ubiquitinated. Post-translationally, may be neddylated. Neddylation may be required for E3 ligase activity.

Its pathway is protein modification; protein ubiquitination. Its function is as follows. Substrate-recognition component of the SCF (SKP1-CUL1-F-box protein)-type E3 ubiquitin ligase complex. Required for muscle atrophy following denervation. The polypeptide is F-box only protein 30 (FBXO30) (Homo sapiens (Human)).